The primary structure comprises 100 residues: Aspartyl/glutamyl-tRNA(Asn/Gln) amidotransferase subunit C (100 aa).

This sequence belongs to the GatC family. In terms of assembly, heterotrimer of A, B and C subunits.

It carries out the reaction L-glutamyl-tRNA(Gln) + L-glutamine + ATP + H2O = L-glutaminyl-tRNA(Gln) + L-glutamate + ADP + phosphate + H(+). The catalysed reaction is L-aspartyl-tRNA(Asn) + L-glutamine + ATP + H2O = L-asparaginyl-tRNA(Asn) + L-glutamate + ADP + phosphate + 2 H(+). In terms of biological role, allows the formation of correctly charged Asn-tRNA(Asn) or Gln-tRNA(Gln) through the transamidation of misacylated Asp-tRNA(Asn) or Glu-tRNA(Gln) in organisms which lack either or both of asparaginyl-tRNA or glutaminyl-tRNA synthetases. The reaction takes place in the presence of glutamine and ATP through an activated phospho-Asp-tRNA(Asn) or phospho-Glu-tRNA(Gln). The sequence is that of Aspartyl/glutamyl-tRNA(Asn/Gln) amidotransferase subunit C from Rickettsia bellii (strain RML369-C).